Reading from the N-terminus, the 407-residue chain is Ribosomal protein uL3-like (407 aa).

Residues 1-31 (MSHRKFSAPRHGHLGFLPHKRSHRHRGKVKT) show a composition bias toward basic residues. Disordered regions lie at residues 1 to 35 (MSHR…WPRD) and 387 to 407 (AFMG…SGDL).

This sequence belongs to the universal ribosomal protein uL3 family. As to quaternary structure, component of the large ribosomal subunit in striated muscle cells.

In terms of biological role, heart- and skeletal muscle-specific component of the ribosome, which regulates muscle function. Component of the large ribosomal subunit in striated muscle cells: replaces the RPL3 paralog in the ribosome in these cells. The ribosome is a large ribonucleoprotein complex responsible for the synthesis of proteins in the cell. Inhibits myotube growth and muscle function. The polypeptide is Ribosomal protein uL3-like (Homo sapiens (Human)).